Reading from the N-terminus, the 309-residue chain is ATP synthase gamma chain (309 aa).

This sequence belongs to the ATPase gamma chain family. F-type ATPases have 2 components, CF(1) - the catalytic core - and CF(0) - the membrane proton channel. CF(1) has five subunits: alpha(3), beta(3), gamma(1), delta(1), epsilon(1). CF(0) has three main subunits: a, b and c.

The protein localises to the cell membrane. Produces ATP from ADP in the presence of a proton gradient across the membrane. The gamma chain is believed to be important in regulating ATPase activity and the flow of protons through the CF(0) complex. The polypeptide is ATP synthase gamma chain (Mycolicibacterium vanbaalenii (strain DSM 7251 / JCM 13017 / BCRC 16820 / KCTC 9966 / NRRL B-24157 / PYR-1) (Mycobacterium vanbaalenii)).